We begin with the raw amino-acid sequence, 265 residues long: tRNA (guanine-N(1)-)-methyltransferase (265 aa).

S-adenosyl-L-methionine contacts are provided by residues Gly-119 and 139–144 (VGDYIL).

Belongs to the RNA methyltransferase TrmD family. In terms of assembly, homodimer.

Its subcellular location is the cytoplasm. It carries out the reaction guanosine(37) in tRNA + S-adenosyl-L-methionine = N(1)-methylguanosine(37) in tRNA + S-adenosyl-L-homocysteine + H(+). Its function is as follows. Specifically methylates guanosine-37 in various tRNAs. This Pseudoalteromonas atlantica (strain T6c / ATCC BAA-1087) protein is tRNA (guanine-N(1)-)-methyltransferase.